The primary structure comprises 65 residues: Trypsin inhibitor 1 (65 aa).

3 cysteine pairs are disulfide-bonded: cysteine 39–cysteine 56, cysteine 46–cysteine 58, and cysteine 52–cysteine 64.

Belongs to the protease inhibitor I7 (squash-type serine protease inhibitor) family.

The protein resides in the secreted. Its function is as follows. Inhibits trypsin. In Trichosanthes kirilowii (Chinese snake gourd), this protein is Trypsin inhibitor 1.